The primary structure comprises 222 residues: Exosome complex component Rrp4 (222 aa).

The region spanning 63-131 is the S1 motif domain; the sequence is NDSVIGKVVD…EVKKVKLGLH (69 aa). Residues 139–200 form the KH domain; that stretch reads EGGTLAYITP…EIVKRALEMI (62 aa).

Belongs to the RRP4 family. Component of the archaeal exosome complex. Forms a trimer of Rrp4 and/or Csl4 subunits. The trimer associates with a hexameric ring-like arrangement composed of 3 Rrp41-Rrp42 heterodimers.

Its subcellular location is the cytoplasm. In terms of biological role, non-catalytic component of the exosome, which is a complex involved in RNA degradation. Increases the RNA binding and the efficiency of RNA degradation. Confers strong poly(A) specificity to the exosome. This Methanothermus fervidus (strain ATCC 43054 / DSM 2088 / JCM 10308 / V24 S) protein is Exosome complex component Rrp4.